Reading from the N-terminus, the 593-residue chain is Efflux pump FUBT (593 aa).

Positions 1 to 44 (MAIDPQPSSPSLSSETIANDTIGNDNNVNEPSVEPKTQENQHTV) are disordered. The segment covering 9–30 (SPSLSSETIANDTIGNDNNVNE) has biased composition (polar residues). Asparagine 19 is a glycosylation site (N-linked (GlcNAc...) asparagine). Transmembrane regions (helical) follow at residues 98–118 (WAFVLLQSLACLATTFASSAY), 135–155 (VATLGISLYVLGFTFGPLIWA), 167–187 (FFFTFMVATAFSAGAAGAGSI), 195–215 (FLTGSIGSAPLSNAPALIADM), 227–247 (MFSGAPFLGPAIGPIAGGFLG), 254–274 (WLHGLMAAFTGVTWIACTVFI), 337–357 (IYISIIYGTMYMCFAAFPIVF), 367–387 (IGGLAFTGIVIGVVLSIISFA), 410–430 (LPPAIMGSLLIPIGLFWFAWT), 438–458 (IVPIIGTVFFAWGLVLVFMAL), 468–488 (IFAASIMAANSALRSLFGAAF), and 503–523 (WASSIPAFLALACVPFPFLFY). The interval 570–593 (THNSHASAAHSHGHRRSLSYTRSV) is disordered.

The protein belongs to the major facilitator superfamily. DHA1 family. Polyamines/proton antiporter (TC 2.A.1.2.16) subfamily.

The protein localises to the cell membrane. Its function is as follows. Efflux pump involved in export of fusaric acid, a mycotoxin with low to moderate toxicity to animals and humans, but with high phytotoxic properties. Constitutes a self-protecting mechanism of the fungus against critical levels of FSA within the cell. The chain is Efflux pump FUBT from Fusarium oxysporum (Fusarium vascular wilt).